The sequence spans 52 residues: Large ribosomal subunit protein eL39 (52 aa).

Belongs to the eukaryotic ribosomal protein eL39 family.

The chain is Large ribosomal subunit protein eL39 from Caldivirga maquilingensis (strain ATCC 700844 / DSM 13496 / JCM 10307 / IC-167).